A 111-amino-acid chain; its full sequence is Universal stress protein B (111 aa).

Helical transmembrane passes span 1-21 and 90-110; these read MFSTIALFWALCLVCIINMMR and FILTSSLSGLVVICLISMLIW.

The protein belongs to the universal stress protein B family.

The protein localises to the cell inner membrane. This chain is Universal stress protein B, found in Photorhabdus laumondii subsp. laumondii (strain DSM 15139 / CIP 105565 / TT01) (Photorhabdus luminescens subsp. laumondii).